A 435-amino-acid chain; its full sequence is Enolase (435 aa).

Position 163 (Q163) interacts with (2R)-2-phosphoglycerate. E205 (proton donor) is an active-site residue. Mg(2+) is bound by residues D243, E292, and D319. Residues K344, R373, S374, and K395 each coordinate (2R)-2-phosphoglycerate. Residue K344 is the Proton acceptor of the active site.

It belongs to the enolase family. It depends on Mg(2+) as a cofactor.

The protein localises to the cytoplasm. The protein resides in the secreted. It localises to the cell surface. It catalyses the reaction (2R)-2-phosphoglycerate = phosphoenolpyruvate + H2O. The protein operates within carbohydrate degradation; glycolysis; pyruvate from D-glyceraldehyde 3-phosphate: step 4/5. In terms of biological role, catalyzes the reversible conversion of 2-phosphoglycerate (2-PG) into phosphoenolpyruvate (PEP). It is essential for the degradation of carbohydrates via glycolysis. The polypeptide is Enolase (Streptococcus pyogenes serotype M12 (strain MGAS2096)).